The sequence spans 634 residues: 1-deoxy-D-xylulose-5-phosphate synthase (634 aa).

Residues His72 and 113 to 115 (GHS) each bind thiamine diphosphate. Asp144 serves as a coordination point for Mg(2+). Thiamine diphosphate-binding positions include 145–146 (GA), Asn173, Tyr284, and Glu367. Position 173 (Asn173) interacts with Mg(2+).

Belongs to the transketolase family. DXPS subfamily. In terms of assembly, homodimer. Mg(2+) serves as cofactor. The cofactor is thiamine diphosphate.

The catalysed reaction is D-glyceraldehyde 3-phosphate + pyruvate + H(+) = 1-deoxy-D-xylulose 5-phosphate + CO2. It functions in the pathway metabolic intermediate biosynthesis; 1-deoxy-D-xylulose 5-phosphate biosynthesis; 1-deoxy-D-xylulose 5-phosphate from D-glyceraldehyde 3-phosphate and pyruvate: step 1/1. Its function is as follows. Catalyzes the acyloin condensation reaction between C atoms 2 and 3 of pyruvate and glyceraldehyde 3-phosphate to yield 1-deoxy-D-xylulose-5-phosphate (DXP). In Listeria welshimeri serovar 6b (strain ATCC 35897 / DSM 20650 / CCUG 15529 / CIP 8149 / NCTC 11857 / SLCC 5334 / V8), this protein is 1-deoxy-D-xylulose-5-phosphate synthase.